We begin with the raw amino-acid sequence, 644 residues long: Phosphatidylinositol polyphosphate 5-phosphatase type IV (644 aa).

Residues 1–193 (MPSKAENLRP…RLPSLLPPRP (193 aa)) are disordered. Tandem repeats lie at residues 10–13 (PSEP), 15–18 (PQPP), 28–31 (PGAP), 39–42 (PPDA), 55–58 (PATP), 69–71 (PIA), 72–74 (PRP), and 75–78 (PARP). Residues 10–242 (PSEPAPQPPE…SLGPGRPRSP (233 aa)) form a 13 X 4 AA repeats of P-X-X-P region. Over residues 78 to 90 (PRLERALSLDDKG) the composition is skewed to basic and acidic residues. Ser99 bears the Phosphoserine mark. Residues 107–118 (NGTSPSRGSVQS) are compositionally biased toward polar residues. Repeat unit 9 spans residues 121 to 124 (PGAP). A compositionally biased stretch (low complexity) spans 152–163 (GSPSSGGNPLSG). 4 tandem repeats follow at residues 169–172 (PNLP), 183–185 (PRL), 190–193 (PPRP), and 236–239 (PGRP). 2 positions are modified to phosphoserine: Ser241 and Ser256. Cys641 bears the Cysteine methyl ester mark. Residue Cys641 is the site of S-farnesyl cysteine attachment. The propeptide at 642–644 (SVS) is removed in mature form.

This sequence belongs to the inositol 1,4,5-trisphosphate 5-phosphatase type IV family. As to quaternary structure, interacts (when prenylated) with PDE6D; this is important for normal location in cilia. Detected in brain, heart, pancreas, testis and spleen.

It localises to the cytoplasm. The protein resides in the cytoskeleton. It is found in the cilium axoneme. The protein localises to the golgi apparatus. Its subcellular location is the golgi stack membrane. It localises to the cell membrane. The protein resides in the cell projection. It is found in the ruffle. The protein localises to the nucleus. It catalyses the reaction a 1,2-diacyl-sn-glycero-3-phospho-(1D-myo-inositol-4,5-bisphosphate) + H2O = a 1,2-diacyl-sn-glycero-3-phospho-(1D-myo-inositol 4-phosphate) + phosphate. The enzyme catalyses a 1,2-diacyl-sn-glycero-3-phospho-(1D-myo-inositol-3,4,5-trisphosphate) + H2O = a 1,2-diacyl-sn-glycero-3-phospho-(1D-myo-inositol-3,4-bisphosphate) + phosphate. The catalysed reaction is a 1,2-diacyl-sn-glycero-3-phospho-(1D-myo-inositol-3,5-bisphosphate) + H2O = a 1,2-diacyl-sn-glycero-3-phospho-(1D-myo-inositol-3-phosphate) + phosphate. With respect to regulation, active in the presence of octyl-glucoside or Triton X-100, but completely inhibited by CTAB. Phosphatidylinositol (PtdIns) phosphatase that specifically hydrolyzes the 5-phosphate of phosphatidylinositol-3,4,5-trisphosphate (PtdIns(3,4,5)P3), phosphatidylinositol 4,5-bisphosphate (PtdIns(4,5)P2) and phosphatidylinositol 3,5-bisphosphate (PtdIns(3,5)P2). Specific for lipid substrates, inactive towards water soluble inositol phosphates. Plays an essential role in the primary cilium by controlling ciliary growth and phosphoinositide 3-kinase (PI3K) signaling and stability. In Homo sapiens (Human), this protein is Phosphatidylinositol polyphosphate 5-phosphatase type IV (INPP5E).